Reading from the N-terminus, the 480-residue chain is UDP-N-acetylmuramate--L-alanine ligase (480 aa).

Position 126-132 (126-132) interacts with ATP; it reads GTHGKTT.

Belongs to the MurCDEF family.

The protein localises to the cytoplasm. It carries out the reaction UDP-N-acetyl-alpha-D-muramate + L-alanine + ATP = UDP-N-acetyl-alpha-D-muramoyl-L-alanine + ADP + phosphate + H(+). It participates in cell wall biogenesis; peptidoglycan biosynthesis. In terms of biological role, cell wall formation. The chain is UDP-N-acetylmuramate--L-alanine ligase from Blochmanniella pennsylvanica (strain BPEN).